Reading from the N-terminus, the 1432-residue chain is MDQEVMDFFDFSKEFKREAAPQGYISSDPSIMATETNESKVPKREVIGTDYVPEIVAKEKCLLDRTLRDDCPQSKRNRTLDDLDTDDEGEETEIRRDDEYYKRYRFNLNRDKNLPIYAKREEILAAINAHPVVILKGQTGCGKTTQVPQYILDEGYKSGKYCNIVVTQPRRIAAISIANRVCQEREWQQDTVCSYQVGLHRPTSLEDTRLLYCTTGVLLNNLINKKTLTHYTHIVLDEVHERDQDMDFLLIVVRRLLATNSRHVKIILMSATIDARELADYFTTTNSVPPVITASHGRKHAIEKFYRDQMGSIRWKEEEDDQLVPQINDHGYRAAVKIIMVIDNMEREAAIQSRLSYDEALRYGAVLIFLPGIDEIDTMAENITSMLQSDRNIKVFIVRCFSLMTPENQRDVFHPPPPGFRKIILTTNIAESSITVPDVSYVIDFCLTKVLVTDTATSFSSLRLTWASKANCRQRAGRVGRLRSGRVYRMVNKSFYQREMAEFGIPEMLRMPLQNSVLRAKELEMGSPIEILALALSPPNLSDIQNTILLLKEVGALFLTVDGVYNAMDGDITYWGTIMSRLPLDTRLSRLIILGYVFNLLEEAIIIAAGLSMRGLYVNEGRRTQGADSFWMHYIFADGSGSDLVAIWRVYLTYLNMVEIAHEQESAIRWAKRFHVSLRSLKEMHLLVQELRWRCTNLGLIPFAVNPSQMMGDREKSIILKVIIAGAFYPNYFTRSKESCAEPDRNIYQTISGHDPCRTVYFTNFKPAYMGELYTRRIKELFQEARIPPENIDVTFQQGSQKVFVTFKQDDWLADSSKFVSVSGRVQSEVYKAVRMRLDRIQRPIRIMTQNNFMNYVQQRGIGDVIEGRWIPPTKPLNVELLALPSVFSKTITGLITCIISCGKFFFQPQSFAECIRNMSEIFNAPQQLRNYVINAGAITKGMMVLAKRDSNFQRATVIRPENQSNRQPMFYVRFIDYGDCALLSMQQLRLMPKELIQQYGDLPPRVFECRLAHVQPSSVVSGNNRWPTAANDLLKSVAKCGRIDIEVYSLFNNVAAVLIPMKDGIINDMLVELKLSRRSDEDYMSRKDHDFRLRRQESARYLTLTERQQINEEYLRSCQLPQDLDLPPPPLDKCNTIVMLKGPSSPLECSMQSIIRVGSSKRVNIDNASVNAVLLDADPQDHHDHLIVAHATVESTNGQTLTARGTTLMPNVQGFGALMVMLFCPTMQLKCNNEGTSYVSILAGLGCDPVTGEPYYAEHDVLINLDVNILEDDVVLINQIRYYIDSVFFNFKEEKDPAVSINERVSIYTQLRSLINRLLCKDRSYMQRNMSNSDFEWESNPELPMPNEPFGKRAIFPMHSLTELQEEDMGRLMHLRENCSMLHKWRNFEGTLPHMTCKLCNQLLESVPQLRLHLLTVLHRDREKQIDYCNQ.

One can recognise a Helicase ATP-binding domain in the interval 124-291; sequence LAAINAHPVV…FTTTNSVPPV (168 aa). Position 137–144 (137–144) interacts with ATP; the sequence is GQTGCGKT. The DEAH box motif lies at 237–240; the sequence is DEVH. The 188-residue stretch at 337–524 folds into the Helicase C-terminal domain; it reads KIIMVIDNME…NSVLRAKELE (188 aa). In terms of domain architecture, Tudor spans 936–999; the sequence is AGAITKGMMV…RLMPKELIQQ (64 aa).

It belongs to the DEAD box helicase family. DEAH subfamily.

It localises to the cytoplasm. It carries out the reaction ATP + H2O = ADP + phosphate + H(+). Functionally, probable ATP-binding RNA helicase which plays a central role during spermatogenesis and oogenesis by repressing transposable elements and preventing their mobilization, which is essential for the germline integrity. Acts via the piRNA metabolic process, which mediates the repression of transposable elements during meiosis by forming complexes composed of piRNAs and Piwi and govern the methylation and subsequent repression of transposons. Involved in the repression of LTR retrotransposon copia. Also involved in telomere regulation by repressing specialized telomeric retroelements HeT-A, TAHRE, and TART; Drosophila telomeres being maintained by transposition of specialized telomeric retroelements. Involved in telomeric trans-silencing, a repression mechanism by which a transposon or a transgene inserted in subtelomeric heterochromatin has the capacity to repress in trans in the female germline, a homologous transposon, or transgene located in euchromatin. Involved in the repression of testis-expressed Stellate genes by the homologous Su(Ste) repeats. Required for anteroposterior and dorsoventral axis formation during oogenesis. The chain is Probable ATP-dependent RNA helicase spindle-E (spn-E) from Drosophila erecta (Fruit fly).